The primary structure comprises 215 residues: 3-isopropylmalate dehydratase small subunit (215 aa).

This sequence belongs to the LeuD family. LeuD type 1 subfamily. As to quaternary structure, heterodimer of LeuC and LeuD.

It catalyses the reaction (2R,3S)-3-isopropylmalate = (2S)-2-isopropylmalate. The protein operates within amino-acid biosynthesis; L-leucine biosynthesis; L-leucine from 3-methyl-2-oxobutanoate: step 2/4. Its function is as follows. Catalyzes the isomerization between 2-isopropylmalate and 3-isopropylmalate, via the formation of 2-isopropylmaleate. This is 3-isopropylmalate dehydratase small subunit from Xylella fastidiosa (strain M12).